Reading from the N-terminus, the 72-residue chain is UPF0270 protein Ent638_3781 (72 aa).

This sequence belongs to the UPF0270 family.

The sequence is that of UPF0270 protein Ent638_3781 from Enterobacter sp. (strain 638).